A 537-amino-acid polypeptide reads, in one-letter code: Light-independent protochlorophyllide reductase subunit B (537 aa).

Asp-36 is a [4Fe-4S] cluster binding site. Residue Asp-292 is the Proton donor of the active site. A substrate-binding site is contributed by 428–429 (GL). Residues 459–483 (TAGETAGQATEAATAPATPGAPLTG) form a disordered region.

This sequence belongs to the ChlB/BchB/BchZ family. Protochlorophyllide reductase is composed of three subunits; BchL, BchN and BchB. Forms a heterotetramer of two BchB and two BchN subunits. [4Fe-4S] cluster serves as cofactor.

It catalyses the reaction chlorophyllide a + oxidized 2[4Fe-4S]-[ferredoxin] + 2 ADP + 2 phosphate = protochlorophyllide a + reduced 2[4Fe-4S]-[ferredoxin] + 2 ATP + 2 H2O. Its pathway is porphyrin-containing compound metabolism; bacteriochlorophyll biosynthesis (light-independent). Functionally, component of the dark-operative protochlorophyllide reductase (DPOR) that uses Mg-ATP and reduced ferredoxin to reduce ring D of protochlorophyllide (Pchlide) to form chlorophyllide a (Chlide). This reaction is light-independent. The NB-protein (BchN-BchB) is the catalytic component of the complex. The chain is Light-independent protochlorophyllide reductase subunit B from Chloroherpeton thalassium (strain ATCC 35110 / GB-78).